The following is a 488-amino-acid chain: Glutamate--tRNA ligase (488 aa).

The 'HIGH' region signature appears at 16–26 (PSPTGEPHVGT). A 'KMSKS' region motif is present at residues 257-261 (KLSKR). K260 serves as a coordination point for ATP.

Belongs to the class-I aminoacyl-tRNA synthetase family. Glutamate--tRNA ligase type 1 subfamily. In terms of assembly, monomer.

It localises to the cytoplasm. The enzyme catalyses tRNA(Glu) + L-glutamate + ATP = L-glutamyl-tRNA(Glu) + AMP + diphosphate. Functionally, catalyzes the attachment of glutamate to tRNA(Glu) in a two-step reaction: glutamate is first activated by ATP to form Glu-AMP and then transferred to the acceptor end of tRNA(Glu). The chain is Glutamate--tRNA ligase from Rhizobium etli (strain ATCC 51251 / DSM 11541 / JCM 21823 / NBRC 15573 / CFN 42).